Consider the following 254-residue polypeptide: Dihydroorotate dehydrogenase B (NAD(+)), electron transfer subunit (254 aa).

The FAD-binding FR-type domain occupies 1–99 (MLQTEMKVIQ…LGPLGKGFDL (99 aa)). Residues 50 to 53 (RPIS), 67 to 69 (LYR), and 74 to 75 (GT) each bind FAD. The [2Fe-2S] cluster site is built by Cys-218, Cys-223, Cys-226, and Cys-241.

Belongs to the PyrK family. As to quaternary structure, heterotetramer of 2 PyrK and 2 PyrD type B subunits. [2Fe-2S] cluster serves as cofactor. Requires FAD as cofactor.

It functions in the pathway pyrimidine metabolism; UMP biosynthesis via de novo pathway; orotate from (S)-dihydroorotate (NAD(+) route): step 1/1. Its function is as follows. Responsible for channeling the electrons from the oxidation of dihydroorotate from the FMN redox center in the PyrD type B subunit to the ultimate electron acceptor NAD(+). The sequence is that of Dihydroorotate dehydrogenase B (NAD(+)), electron transfer subunit from Listeria innocua serovar 6a (strain ATCC BAA-680 / CLIP 11262).